We begin with the raw amino-acid sequence, 194 residues long: Fe/S biogenesis protein NfuA (194 aa).

[4Fe-4S] cluster-binding residues include Cys152 and Cys155.

It belongs to the NfuA family. Homodimer. The cofactor is [4Fe-4S] cluster.

Its function is as follows. Involved in iron-sulfur cluster biogenesis. Binds a 4Fe-4S cluster, can transfer this cluster to apoproteins, and thereby intervenes in the maturation of Fe/S proteins. Could also act as a scaffold/chaperone for damaged Fe/S proteins. In Pseudomonas putida (strain GB-1), this protein is Fe/S biogenesis protein NfuA.